The primary structure comprises 107 residues: Iron-binding protein IscA (107 aa).

Cys-35, Cys-99, and Cys-101 together coordinate Fe cation.

The protein belongs to the HesB/IscA family. In terms of assembly, homodimer; may form tetramers and higher multimers. Fe cation is required as a cofactor.

Is able to transfer iron-sulfur clusters to apo-ferredoxin. Multiple cycles of [2Fe2S] cluster formation and transfer are observed, suggesting that IscA acts catalytically. Recruits intracellular free iron so as to provide iron for the assembly of transient iron-sulfur cluster in IscU in the presence of IscS, L-cysteine and the thioredoxin reductase system TrxA/TrxB. The sequence is that of Iron-binding protein IscA from Pectobacterium atrosepticum (strain SCRI 1043 / ATCC BAA-672) (Erwinia carotovora subsp. atroseptica).